We begin with the raw amino-acid sequence, 505 residues long: Peroxisome proliferator-activated receptor gamma (505 aa).

O-linked (GlcNAc) threonine glycosylation is present at T84. Position 112 is a phosphoserine; by MAPK (S112). Residues 136 to 210 constitute a DNA-binding region (nuclear receptor); that stretch reads AIECRVCGDK…VGMSHNAIRF (75 aa). 2 NR C4-type zinc fingers span residues 139–159 and 176–198; these read CRVCGDKASGFHYGVHACEGC and CDLNCRIHKKSRNKCQYCRFQKC. Positions 205-280 are interaction with FAM120B; that stretch reads HNAIRFGRMP…DKSPFVIYDM (76 aa). The 266-residue stretch at 238 to 503 folds into the NR LBD domain; the sequence is DLRALAKHLY…HPLLQEIYKD (266 aa). A Glycyl lysine isopeptide (Lys-Gly) (interchain with G-Cter in ubiquitin) cross-link involves residue K252. The short motif at 495–503 is the 9aaTAD element; sequence PLLQEIYKD.

Belongs to the nuclear hormone receptor family. NR1 subfamily. Interacts with FOXO1 (acetylated form). Heterodimer with other nuclear receptors, such as RXRA. The heterodimer with the retinoic acid receptor RXRA is called adipocyte-specific transcription factor ARF6. Interacts with NCOA6 coactivator, leading to a strong increase in transcription of target genes. Interacts with coactivator PPARBP, leading to a mild increase in transcription of target genes. Interacts with NOCA7 in a ligand-inducible manner. Interacts with NCOA1 and NCOA2 LXXLL motifs. Interacts with ASXL1, ASXL2, DNTTIP2, FAM120B, MAP2K1/MEK1, NR0B2, PDPK1, PRDM16, PRMT2 and TGFB1I1. Interacts (when activated by agonist) with PPP5C. Interacts with HELZ2 and THRAP3; the interaction stimulates the transcriptional activity of PPARG. Interacts with PER2, the interaction is ligand dependent and blocks PPARG recruitment to target promoters. Interacts with NOCT. Interacts with ACTN4. Interacts (when in the liganded conformation) with GPS2. Interacts with CRY1 and CRY2 in a ligand-dependent manner. In the absence of hormonal ligand, interacts with TACC1. In macrophages, interacts with PAQR3 and STUB1; the interactions promote PPARG poylubiquitination and STUB1-mediated degradation. Phosphorylated by MAPK. The phosphorylation inhibits PPAR gamma activity. Post-translationally, O-GlcNAcylation at Thr-84 reduces transcriptional activity in adipocytes. In terms of processing, phosphorylated at basal conditions and dephosphorylated when treated with the ligand. May be dephosphorylated by PPP5C. The phosphorylated form may be inactive and dephosphorylation at induces adipogenic activity. Ubiquitinated by E3 ubiquitin-protein ligase complex containing FBXO9; leading to proteasomal degradation. Ubiquitinated at Lys-252 by TRIM55 leading to proteasomal degradation. Ubiquitinated by E3 ubiquitin-protein ligase STUB1/CHIP; leading to proteasomal degradation. Highest expression in adipose tissue.

It localises to the nucleus. The protein resides in the cytoplasm. With respect to regulation, PDPK1 activates its transcriptional activity independently of its kinase activity. Nuclear receptor that binds peroxisome proliferators such as hypolipidemic drugs and fatty acids. Once activated by a ligand, the nuclear receptor binds to DNA specific PPAR response elements (PPRE) and modulates the transcription of its target genes, such as acyl-CoA oxidase. It therefore controls the peroxisomal beta-oxidation pathway of fatty acids. Key regulator of adipocyte differentiation and glucose homeostasis. ARF6 acts as a key regulator of the tissue-specific adipocyte P2 (aP2) enhancer. Acts as a critical regulator of gut homeostasis by suppressing NF-kappa-B-mediated pro-inflammatory responses. Plays a role in the regulation of cardiovascular circadian rhythms by regulating the transcription of BMAL1 in the blood vessels. This is Peroxisome proliferator-activated receptor gamma (Pparg) from Rattus norvegicus (Rat).